The chain runs to 132 residues: Small ribosomal subunit protein uS8 (132 aa).

Belongs to the universal ribosomal protein uS8 family. In terms of assembly, part of the 30S ribosomal subunit. Contacts proteins S5 and S12.

One of the primary rRNA binding proteins, it binds directly to 16S rRNA central domain where it helps coordinate assembly of the platform of the 30S subunit. In Bartonella tribocorum (strain CIP 105476 / IBS 506), this protein is Small ribosomal subunit protein uS8.